A 206-amino-acid chain; its full sequence is Ribosomal RNA small subunit methyltransferase G (206 aa).

S-adenosyl-L-methionine is bound by residues G74, L79, 125 to 126, and R140; that span reads VE.

The protein belongs to the methyltransferase superfamily. RNA methyltransferase RsmG family.

The protein resides in the cytoplasm. The enzyme catalyses guanosine(527) in 16S rRNA + S-adenosyl-L-methionine = N(7)-methylguanosine(527) in 16S rRNA + S-adenosyl-L-homocysteine. In terms of biological role, specifically methylates the N7 position of guanine in position 527 of 16S rRNA. This Shewanella sp. (strain MR-7) protein is Ribosomal RNA small subunit methyltransferase G.